The chain runs to 200 residues: dITP/XTP pyrophosphatase (200 aa).

7-12 (TQNKRK) serves as a coordination point for substrate. Positions 42 and 71 each coordinate Mg(2+). Asp-71 (proton acceptor) is an active-site residue. Residues Ser-72, 156–159 (FGYD), Lys-179, and 184–185 (HR) contribute to the substrate site.

This sequence belongs to the HAM1 NTPase family. In terms of assembly, homodimer. Mg(2+) is required as a cofactor.

It catalyses the reaction XTP + H2O = XMP + diphosphate + H(+). The enzyme catalyses dITP + H2O = dIMP + diphosphate + H(+). It carries out the reaction ITP + H2O = IMP + diphosphate + H(+). Its function is as follows. Pyrophosphatase that catalyzes the hydrolysis of nucleoside triphosphates to their monophosphate derivatives, with a high preference for the non-canonical purine nucleotides XTP (xanthosine triphosphate), dITP (deoxyinosine triphosphate) and ITP. Seems to function as a house-cleaning enzyme that removes non-canonical purine nucleotides from the nucleotide pool, thus preventing their incorporation into DNA/RNA and avoiding chromosomal lesions. The chain is dITP/XTP pyrophosphatase from Malacoplasma penetrans (strain HF-2) (Mycoplasma penetrans).